The sequence spans 262 residues: Hemin import ATP-binding protein HmuV (262 aa).

The 242-residue stretch at 3 to 244 folds into the ABC transporter domain; that stretch reads LQARNLTLAR…DHMRRVYGIE (242 aa). 35-42 lines the ATP pocket; it reads GANGAGKS.

The protein belongs to the ABC transporter superfamily. Heme (hemin) importer (TC 3.A.1.14.5) family. The complex is composed of two ATP-binding proteins (HmuV), two transmembrane proteins (HmuU) and a solute-binding protein (HmuT).

It localises to the cell inner membrane. Functionally, part of the ABC transporter complex HmuTUV involved in hemin import. Responsible for energy coupling to the transport system. The sequence is that of Hemin import ATP-binding protein HmuV from Bordetella parapertussis (strain 12822 / ATCC BAA-587 / NCTC 13253).